Reading from the N-terminus, the 356-residue chain is Peptide chain release factor 1 (356 aa).

Q235 is modified (N5-methylglutamine).

This sequence belongs to the prokaryotic/mitochondrial release factor family. In terms of processing, methylated by PrmC. Methylation increases the termination efficiency of RF1.

It is found in the cytoplasm. In terms of biological role, peptide chain release factor 1 directs the termination of translation in response to the peptide chain termination codons UAG and UAA. In Hydrogenobaculum sp. (strain Y04AAS1), this protein is Peptide chain release factor 1.